The sequence spans 331 residues: 4-hydroxy-3-methylbut-2-enyl diphosphate reductase (331 aa).

Cys-12 is a binding site for [4Fe-4S] cluster. Residues His-43 and His-81 each contribute to the (2E)-4-hydroxy-3-methylbut-2-enyl diphosphate site. The dimethylallyl diphosphate site is built by His-43 and His-81. Positions 43 and 81 each coordinate isopentenyl diphosphate. Residue Cys-103 participates in [4Fe-4S] cluster binding. His-131 is a (2E)-4-hydroxy-3-methylbut-2-enyl diphosphate binding site. His-131 lines the dimethylallyl diphosphate pocket. His-131 contributes to the isopentenyl diphosphate binding site. Catalysis depends on Glu-133, which acts as the Proton donor. Thr-170 contributes to the (2E)-4-hydroxy-3-methylbut-2-enyl diphosphate binding site. Position 198 (Cys-198) interacts with [4Fe-4S] cluster. (2E)-4-hydroxy-3-methylbut-2-enyl diphosphate-binding residues include Ser-226, Asn-228, and Ser-271. Positions 226, 228, and 271 each coordinate dimethylallyl diphosphate. Isopentenyl diphosphate is bound by residues Ser-226, Asn-228, and Ser-271.

This sequence belongs to the IspH family. [4Fe-4S] cluster serves as cofactor.

The enzyme catalyses isopentenyl diphosphate + 2 oxidized [2Fe-2S]-[ferredoxin] + H2O = (2E)-4-hydroxy-3-methylbut-2-enyl diphosphate + 2 reduced [2Fe-2S]-[ferredoxin] + 2 H(+). It carries out the reaction dimethylallyl diphosphate + 2 oxidized [2Fe-2S]-[ferredoxin] + H2O = (2E)-4-hydroxy-3-methylbut-2-enyl diphosphate + 2 reduced [2Fe-2S]-[ferredoxin] + 2 H(+). It functions in the pathway isoprenoid biosynthesis; dimethylallyl diphosphate biosynthesis; dimethylallyl diphosphate from (2E)-4-hydroxy-3-methylbutenyl diphosphate: step 1/1. Its pathway is isoprenoid biosynthesis; isopentenyl diphosphate biosynthesis via DXP pathway; isopentenyl diphosphate from 1-deoxy-D-xylulose 5-phosphate: step 6/6. Functionally, catalyzes the conversion of 1-hydroxy-2-methyl-2-(E)-butenyl 4-diphosphate (HMBPP) into a mixture of isopentenyl diphosphate (IPP) and dimethylallyl diphosphate (DMAPP). Acts in the terminal step of the DOXP/MEP pathway for isoprenoid precursor biosynthesis. This is 4-hydroxy-3-methylbut-2-enyl diphosphate reductase from Listeria monocytogenes serotype 4b (strain CLIP80459).